Reading from the N-terminus, the 166-residue chain is Phospholipase A2 inhibitor clone 08 (166 aa).

A signal peptide spans 1–19 (MRLILLSSLLLLGIFLANG). Residues 46–161 (LKGAFLTVHR…CDDNLLVVCE (116 aa)) form the C-type lectin domain. Intrachain disulfides connect C83–C160 and C138–C152. Residue N122 is glycosylated (N-linked (GlcNAc...) asparagine).

The protein belongs to the alpha-type phospholipase A2 inhibitor family. As to quaternary structure, homotrimer; non-covalently linked. As to expression, expressed by the liver.

It is found in the secreted. Its function is as follows. This phospholipase A2 inhibitor binds directly phospholipase A2 in the presence or absence of calcium. The protein is Phospholipase A2 inhibitor clone 08 of Bothrops moojeni (Lance-headed viper).